Reading from the N-terminus, the 68-residue chain is Small integral membrane protein 10-like protein 3 (68 aa).

The chain is Small integral membrane protein 10-like protein 3 from Homo sapiens (Human).